Reading from the N-terminus, the 352-residue chain is Ribosomal RNA large subunit methyltransferase M (352 aa).

S-adenosyl-L-methionine-binding positions include serine 184, 217–220, aspartate 236, aspartate 256, and aspartate 272; that span reads APGG. Lysine 301 functions as the Proton acceptor in the catalytic mechanism.

This sequence belongs to the class I-like SAM-binding methyltransferase superfamily. RNA methyltransferase RlmE family. RlmM subfamily. In terms of assembly, monomer.

It localises to the cytoplasm. It carries out the reaction cytidine(2498) in 23S rRNA + S-adenosyl-L-methionine = 2'-O-methylcytidine(2498) in 23S rRNA + S-adenosyl-L-homocysteine + H(+). Its function is as follows. Catalyzes the 2'-O-methylation at nucleotide C2498 in 23S rRNA. In Pseudomonas aeruginosa (strain LESB58), this protein is Ribosomal RNA large subunit methyltransferase M.